The primary structure comprises 223 residues: Deoxyribose-phosphate aldolase (223 aa).

D91 (proton donor/acceptor) is an active-site residue. Catalysis depends on K153, which acts as the Schiff-base intermediate with acetaldehyde. K182 (proton donor/acceptor) is an active-site residue.

Belongs to the DeoC/FbaB aldolase family. DeoC type 1 subfamily.

The protein localises to the cytoplasm. The catalysed reaction is 2-deoxy-D-ribose 5-phosphate = D-glyceraldehyde 3-phosphate + acetaldehyde. The protein operates within carbohydrate degradation; 2-deoxy-D-ribose 1-phosphate degradation; D-glyceraldehyde 3-phosphate and acetaldehyde from 2-deoxy-alpha-D-ribose 1-phosphate: step 2/2. Functionally, catalyzes a reversible aldol reaction between acetaldehyde and D-glyceraldehyde 3-phosphate to generate 2-deoxy-D-ribose 5-phosphate. The chain is Deoxyribose-phosphate aldolase from Streptococcus pyogenes serotype M28 (strain MGAS6180).